The primary structure comprises 298 residues: Keratin-associated protein 10-11 (298 aa).

Tandem repeats lie at residues 26–30 (CCEPP), 36–40 (CCAPA), 57–61 (CCQAA), 79–83 (CCQQS), 89–93 (CCTSS), 99–103 (CCVPV), 104–108 (CCKTV), 109–113 (CCKPV), 114–118 (CCVPV), 119–123 (CCGAA), 126–130 (CCRQS), 136–140 (CCASS), 146–150 (CCVPV), 151–155 (CCKPV), 156–160 (CCVST), 168–172 (CCQQS), 178–182 (CCTSS), 188–192 (CCVPV), 193–197 (CCKTV), 203–207 (CCVPV), 225–229 (CCTTS), 230–234 (CCRPS), 249–253 (CCVPV), 256–260 (CCAPT), and 267–271 (CCRPA). The tract at residues 26-271 (CCEPPCSAPS…SCQSSCCRPA (246 aa)) is 25 X 5 AA repeats of C-C-X(3).

Belongs to the KRTAP type 10 family. Interacts with hair keratins. In terms of tissue distribution, restricted to a narrow region of the hair fiber cuticle, lying approximately 20 cell layers above the apex of the dermal papilla of the hair root; not detected in any other tissues.

In terms of biological role, in the hair cortex, hair keratin intermediate filaments are embedded in an interfilamentous matrix, consisting of hair keratin-associated proteins (KRTAP), which are essential for the formation of a rigid and resistant hair shaft through their extensive disulfide bond cross-linking with abundant cysteine residues of hair keratins. The matrix proteins include the high-sulfur and high-glycine-tyrosine keratins. This chain is Keratin-associated protein 10-11 (KRTAP10-11), found in Homo sapiens (Human).